The primary structure comprises 544 residues: Membrane protein insertase YidC (544 aa).

The helical transmembrane segment at 6–26 (NLLLIALLFVTFMLWQAWETD) threads the bilayer. The disordered stretch occupies residues 112–132 (SGLTGKNGPDNPANGPRPLFT). A run of 4 helical transmembrane segments spans residues 343-363 (KFLH…TFIV), 418-438 (LGGC…YYML), 456-476 (LSAQ…MFFI), and 497-517 (PVIF…YYIV).

Belongs to the OXA1/ALB3/YidC family. Type 1 subfamily. As to quaternary structure, interacts with the Sec translocase complex via SecD. Specifically interacts with transmembrane segments of nascent integral membrane proteins during membrane integration.

The protein localises to the cell inner membrane. In terms of biological role, required for the insertion and/or proper folding and/or complex formation of integral membrane proteins into the membrane. Involved in integration of membrane proteins that insert both dependently and independently of the Sec translocase complex, as well as at least some lipoproteins. Aids folding of multispanning membrane proteins. This chain is Membrane protein insertase YidC, found in Pectobacterium carotovorum subsp. carotovorum (strain PC1).